Here is a 191-residue protein sequence, read N- to C-terminus: Ribonuclease M5 (191 aa).

The Toprim domain maps to 8-91 (HEFIVVEGRD…AFINRQDALP (84 aa)). 3 residues coordinate Mg(2+): glutamate 14, aspartate 60, and aspartate 62.

The protein belongs to the ribonuclease M5 family. The cofactor is Mg(2+).

The protein resides in the cytoplasm. The catalysed reaction is Endonucleolytic cleavage of RNA, removing 21 and 42 nucleotides, respectively, from the 5'- and 3'-termini of a 5S-rRNA precursor.. Its function is as follows. Required for correct processing of both the 5' and 3' ends of 5S rRNA precursor. Cleaves both sides of a double-stranded region yielding mature 5S rRNA in one step. The chain is Ribonuclease M5 from Listeria monocytogenes serovar 1/2a (strain ATCC BAA-679 / EGD-e).